We begin with the raw amino-acid sequence, 1297 residues long: MLHIFRGTPALSNFRLNQLFSGFQQDNLPIVSCYAEFLHFAHLSEALTEIEREKLEELLRYGPTQKSQEPYGECFVVIPRIGTISSWASKATDIAHNCDLNKVLRLERGIAYYFKFNRTLTAEEEQQLVFRIYDPMMESIVRSPQEAAVLFEQHDPKPFTTVDILTGGHVALEKANVTLGLALAKDEIDYLVENFTALGRNPTDVELYMFAQANSEHCRHKIFNADWIIDGKKQDKSLFKMIKNTFEKTPDYVLSAYKDNAAVMEGSKVGRFFPDQDGQYRYHQEDTHILMKVETHNHPTAISPFPGAATGSGGEIRDEGATGRGAKPKAGLVGFSVSNLCIPNFPQPWENALSKPSRIASALDIMIEGPLGGAAFNNEFGRPALLGYFRTYEEKVNSFNGEEVRGYHKPIMLAGGIGNIRHEHVQKGEIPVGAKLIVLGGAAMNIGLGGGAASSMASGKSKEDLDFASVQRDNPEMERRCQEVIDRCWQLGSENPILFIHDVGAGGLSNAMPELVHDGGRGGRFELRKILCDEKGMSPLEIWCNESQERYVLAVSPEKLPLFEAICQRERASFAVIGEATEQQQLTLQDSHFNNNPIDLPMNILLGKTPKMIRDVKSAKVNNPQLDQSMIQIKEALFRVLRLPAVAEKTFLITIGDRSVTGMVARDQMVGPWQVPVADCAVTTASLDSYHGEAMSIGERTPVALLDFAASARLAVAESITNIAATDIGDIRRIKLSANWMAAAGHGGEDAGLYEAVKAIGEELCPQLGLTIPVGKDSMSMKTTWQEEGYQKSVTAPLSVIISAFARVEDVRKTVTPQLRMDKGDSRLLLIDLGEGKNRLGATALAQVYKQLGDVPADVVNVSLLKGFFNAMQALVKQEKLLAYHDRSDGGLIVTLAEMAFAGHCGISIDISALGDNDLGVLFNEELGAVIQVKESDLKAVRAVLTEHGLIHLTKELGIVTADDHIEITRSTRVLLSEKRSVLRGIWAELTHQMQRLRDNPDCADQEFEMKKDPNDKGLSAYLTYDLNEKITAPYIQKGTKPRIAILREQGVNSHYEMAAAFDRAGFNAIDVHMSDLQKGRHHLQDFNALVACGGFSYGDVLGAGGGWAKSILFNTALRDQFSAFFHRQDTLALGVCNGCQMLSNLAEIIPGTENWGRFVRNKSERFEARVAMVRINNTHSVWFDGMAGSHMPIAVSHGEGRIEFKHDQQLQALKAQNLIAAQYIDSQLNPTEIYPANPNGSAEGITALSNSNGRVAIMMPHPERVFRAVNNSWYPENWQEDGAWMRLFQNARVALG.

Residues 304–323 form a disordered region; that stretch reads PFPGAATGSGGEIRDEGATG. ATP contacts are provided by residues 307 to 318 and alanine 678; that span reads GAATGSGGEIRD. Mg(2+) contacts are provided by aspartate 679, glutamate 718, asparagine 722, and aspartate 886. An ATP-binding site is contributed by serine 888. In terms of domain architecture, Glutamine amidotransferase type-1 spans 1043-1297; the sequence is RIAILREQGV…LFQNARVALG (255 aa). The Nucleophile role is filled by cysteine 1137. Catalysis depends on residues histidine 1262 and glutamate 1264.

The protein in the N-terminal section; belongs to the FGAMS family. Monomer.

The protein resides in the cytoplasm. The catalysed reaction is N(2)-formyl-N(1)-(5-phospho-beta-D-ribosyl)glycinamide + L-glutamine + ATP + H2O = 2-formamido-N(1)-(5-O-phospho-beta-D-ribosyl)acetamidine + L-glutamate + ADP + phosphate + H(+). It participates in purine metabolism; IMP biosynthesis via de novo pathway; 5-amino-1-(5-phospho-D-ribosyl)imidazole from N(2)-formyl-N(1)-(5-phospho-D-ribosyl)glycinamide: step 1/2. In terms of biological role, phosphoribosylformylglycinamidine synthase involved in the purines biosynthetic pathway. Catalyzes the ATP-dependent conversion of formylglycinamide ribonucleotide (FGAR) and glutamine to yield formylglycinamidine ribonucleotide (FGAM) and glutamate. In Histophilus somni (strain 129Pt) (Haemophilus somnus), this protein is Phosphoribosylformylglycinamidine synthase.